A 204-amino-acid chain; its full sequence is dITP/XTP pyrophosphatase (204 aa).

11–16 contacts substrate; that stretch reads SRNRKK. The Proton acceptor role is filled by Asp-76. Asp-76 serves as a coordination point for Mg(2+). Substrate-binding positions include Ser-77, 158–161, Lys-181, and 186–187; these read FGYD and HR.

It belongs to the HAM1 NTPase family. Homodimer. Mg(2+) is required as a cofactor.

It carries out the reaction XTP + H2O = XMP + diphosphate + H(+). The catalysed reaction is dITP + H2O = dIMP + diphosphate + H(+). The enzyme catalyses ITP + H2O = IMP + diphosphate + H(+). Its function is as follows. Pyrophosphatase that catalyzes the hydrolysis of nucleoside triphosphates to their monophosphate derivatives, with a high preference for the non-canonical purine nucleotides XTP (xanthosine triphosphate), dITP (deoxyinosine triphosphate) and ITP. Seems to function as a house-cleaning enzyme that removes non-canonical purine nucleotides from the nucleotide pool, thus preventing their incorporation into DNA/RNA and avoiding chromosomal lesions. The chain is dITP/XTP pyrophosphatase from Mycobacterium tuberculosis (strain CDC 1551 / Oshkosh).